A 368-amino-acid polypeptide reads, in one-letter code: Tetraacyldisaccharide 4'-kinase (368 aa).

Position 66-73 (66-73 (TVGGTGKT)) interacts with ATP.

It belongs to the LpxK family.

The enzyme catalyses a lipid A disaccharide + ATP = a lipid IVA + ADP + H(+). The protein operates within glycolipid biosynthesis; lipid IV(A) biosynthesis; lipid IV(A) from (3R)-3-hydroxytetradecanoyl-[acyl-carrier-protein] and UDP-N-acetyl-alpha-D-glucosamine: step 6/6. Transfers the gamma-phosphate of ATP to the 4'-position of a tetraacyldisaccharide 1-phosphate intermediate (termed DS-1-P) to form tetraacyldisaccharide 1,4'-bis-phosphate (lipid IVA). In Desulfatibacillum aliphaticivorans, this protein is Tetraacyldisaccharide 4'-kinase.